A 596-amino-acid polypeptide reads, in one-letter code: Elongation factor 4 (596 aa).

The region spanning 2–183 (KNIRNFSIIA…TIITKIPAPK (182 aa)) is the tr-type G domain. GTP-binding positions include 14 to 19 (DHGKST) and 130 to 133 (NKID).

The protein belongs to the TRAFAC class translation factor GTPase superfamily. Classic translation factor GTPase family. LepA subfamily.

It localises to the cell inner membrane. The catalysed reaction is GTP + H2O = GDP + phosphate + H(+). In terms of biological role, required for accurate and efficient protein synthesis under certain stress conditions. May act as a fidelity factor of the translation reaction, by catalyzing a one-codon backward translocation of tRNAs on improperly translocated ribosomes. Back-translocation proceeds from a post-translocation (POST) complex to a pre-translocation (PRE) complex, thus giving elongation factor G a second chance to translocate the tRNAs correctly. Binds to ribosomes in a GTP-dependent manner. The chain is Elongation factor 4 from Campylobacter lari (strain RM2100 / D67 / ATCC BAA-1060).